Consider the following 2297-residue polypeptide: Xin actin-binding repeat-containing protein 1 (2297 aa).

The segment covering 1–11 has biased composition (basic and acidic residues); that stretch reads MAEVAKQKKAT. The interval 1–28 is disordered; it reads MAEVAKQKKATEAVCGDEDFPPPPPPLP. Xin repeat units lie at residues 104 to 119, 139 to 154, 169 to 184, 208 to 223, 248 to 263, 286 to 301, 323 to 338, 362 to 377, and 396 to 411; these read GEVQ…WTLD, GDVK…STFD, GDVR…QPLD, GDVT…KPLD, GDVK…DPCC, SDFK…QPLD, GGVD…QPLD, ADVH…QPLS, and GNVG…QPMD. Positions 433–442 are enriched in basic and acidic residues; that stretch reads GEVQDKRMQF. Residues 433-461 form a disordered region; sequence GEVQDKRMQFEKSTAGKTAGDSGNKVQND. 14 Xin repeats span residues 464-479, 494-509, 532-547, 570-585, 605-620, 638-653, 677-692, 715-730, 747-762, 779-794, 818-833, 856-871, 893-908, and 928-943; these read GDVK…LPLN, GDVK…TPLY, GNVQ…RPLD, DDTR…QPLD, SNVK…KPMD, ADVK…QPLD, VNVK…EPLD, GDVS…KSLG, GSVH…QPIG, GDVG…LSLD, VNVK…QPLY, GDVR…KPLD, GDVK…QPLD, and KCVQ…EQAS. At Ser952 the chain carries Phosphoserine. 3 Xin repeats span residues 959-974, 997-1012, and 1033-1048; these read GDVR…QPID, GDVK…QSLD, and ADVK…TPLD. 4 disordered regions span residues 1617 to 1680, 1866 to 1900, 2147 to 2191, and 2243 to 2297; these read PSSH…KDQK, KENI…VPSI, SAAR…PRRK, and ELSS…TEKH. 2 stretches are compositionally biased toward low complexity: residues 1618–1630 and 1644–1656; these read SSHT…VSVT and SVSS…KNSS. Basic and acidic residues-rich tracts occupy residues 1876–1885 and 2151–2162; these read SNKDELHFTS and KPAESPTDKPKT. The span at 2166-2180 shows a compositional bias: low complexity; it reads QSNAGSSSSQNSSAS. Residues 2259–2278 show a composition bias toward polar residues; the sequence is GMTSPVLQRSGQSFSSNSLS.

It belongs to the Xin family. As to expression, expressed at intercalated disks in the heart (at protein level).

The protein localises to the cell junction. It localises to the adherens junction. The protein resides in the desmosome. Positively regulates organization of the outer plexiform layer and Muller glia cells in the retina. May protect actin filaments from depolymerization. May play a role in development of normal skeletal muscle morphology and muscle fiber type composition. In Danio rerio (Zebrafish), this protein is Xin actin-binding repeat-containing protein 1.